The sequence spans 384 residues: MFQFETTTACPDTKARTGKMTTAHGDVATPVFMPVGTLATVKSLSPEDLVACGAQIILGNTYHLYLRPGCDIIDAFSGVHAFMGWNRPLLTDSGGFQVFSLAKLSRITEEGAAFQSHLDGSSHLLTPESVIDIQNRLGSDIQMCLDQCIAFPAEKGAARDAANLTTRWAGRCRNRWQETGGPSRCGLFGIVQGGMFDDLRADSAGRLVDLDFSGYAVGGLSVGEPIETRLAVAEHTLSLLPPDRPRYIMGVGTPAELVELVALGADMFDCVMPTRNARNGKLFTSFGAINIRNACHAKETGPVDPACTCYTCTRFSRAYLRHLFMSRELLAYRLATLHNLFYYINLINDARAAVAAGRFAAFRKAFYAAQQATGPTGKEPCAGS.

Asp92 (proton acceptor) is an active-site residue. Residues 92 to 96 (DSGGF), Asp146, Gln192, and Gly219 contribute to the substrate site. An RNA binding region spans residues 250–256 (GVGTPAE). The Nucleophile role is filled by Asp269. Positions 274 to 278 (TRNAR) are RNA binding; important for wobble base 34 recognition. Zn(2+) contacts are provided by Cys307, Cys309, Cys312, and His338.

The protein belongs to the queuine tRNA-ribosyltransferase family. As to quaternary structure, homodimer. Within each dimer, one monomer is responsible for RNA recognition and catalysis, while the other monomer binds to the replacement base PreQ1. The cofactor is Zn(2+).

It carries out the reaction 7-aminomethyl-7-carbaguanine + guanosine(34) in tRNA = 7-aminomethyl-7-carbaguanosine(34) in tRNA + guanine. The protein operates within tRNA modification; tRNA-queuosine biosynthesis. Functionally, catalyzes the base-exchange of a guanine (G) residue with the queuine precursor 7-aminomethyl-7-deazaguanine (PreQ1) at position 34 (anticodon wobble position) in tRNAs with GU(N) anticodons (tRNA-Asp, -Asn, -His and -Tyr). Catalysis occurs through a double-displacement mechanism. The nucleophile active site attacks the C1' of nucleotide 34 to detach the guanine base from the RNA, forming a covalent enzyme-RNA intermediate. The proton acceptor active site deprotonates the incoming PreQ1, allowing a nucleophilic attack on the C1' of the ribose to form the product. After dissociation, two additional enzymatic reactions on the tRNA convert PreQ1 to queuine (Q), resulting in the hypermodified nucleoside queuosine (7-(((4,5-cis-dihydroxy-2-cyclopenten-1-yl)amino)methyl)-7-deazaguanosine). The chain is Queuine tRNA-ribosyltransferase from Desulfosudis oleivorans (strain DSM 6200 / JCM 39069 / Hxd3) (Desulfococcus oleovorans).